The following is a 399-amino-acid chain: Carbamoyl phosphate synthase arginine-specific small chain (399 aa).

The Glutamine amidotransferase type-1 domain occupies aspartate 187 to leucine 379. Cysteine 267 functions as the Nucleophile in the catalytic mechanism. Catalysis depends on residues histidine 352 and glutamate 354.

Belongs to the CarA family. As to quaternary structure, heterodimer composed of 2 chains; the small (or glutamine) chain promotes the hydrolysis of glutamine to ammonia, which is used by the large (or ammonia) chain to synthesize carbamoyl phosphate.

It is found in the cytoplasm. It catalyses the reaction hydrogencarbonate + L-glutamine + 2 ATP + H2O = carbamoyl phosphate + L-glutamate + 2 ADP + phosphate + 2 H(+). It carries out the reaction L-glutamine + H2O = L-glutamate + NH4(+). It functions in the pathway amino-acid biosynthesis; L-arginine biosynthesis; carbamoyl phosphate from bicarbonate: step 1/1. Functionally, small subunit of the arginine-specific carbamoyl phosphate synthase (CPSase). CPSase catalyzes the formation of carbamoyl phosphate from the ammonia moiety of glutamine, carbonate, and phosphate donated by ATP, constituting the first step of 2 biosynthetic pathways, one leading to arginine and/or urea and the other to pyrimidine nucleotides. The small subunit (glutamine amidotransferase) binds and cleaves glutamine to supply the large subunit with the substrate ammonia. The protein is Carbamoyl phosphate synthase arginine-specific small chain (CPA1) of Eremothecium gossypii (strain ATCC 10895 / CBS 109.51 / FGSC 9923 / NRRL Y-1056) (Yeast).